Consider the following 151-residue polypeptide: Protein SprT-like (151 aa).

In terms of domain architecture, SprT-like spans 6–148 (LQALVERISL…FCRGKLKKIK (143 aa)). His67 provides a ligand contact to Zn(2+). The active site involves Glu68. His71 is a binding site for Zn(2+).

This sequence belongs to the SprT family. It depends on Zn(2+) as a cofactor.

The protein resides in the cytoplasm. This chain is Protein SprT-like, found in Anoxybacillus flavithermus (strain DSM 21510 / WK1).